Reading from the N-terminus, the 542-residue chain is Chaperonin GroEL 2 (542 aa).

ATP-binding positions include 30-33 (TLGP), K51, 87-91 (DGTTT), G415, and D496. A disordered region spans residues 523–542 (AEKPKKDGQPQMPPAPGMDF). A compositionally biased stretch (pro residues) spans 533 to 542 (QMPPAPGMDF).

This sequence belongs to the chaperonin (HSP60) family. As to quaternary structure, forms a cylinder of 14 subunits composed of two heptameric rings stacked back-to-back. Interacts with the co-chaperonin GroES.

It is found in the cytoplasm. The enzyme catalyses ATP + H2O + a folded polypeptide = ADP + phosphate + an unfolded polypeptide.. Its function is as follows. Together with its co-chaperonin GroES, plays an essential role in assisting protein folding. The GroEL-GroES system forms a nano-cage that allows encapsulation of the non-native substrate proteins and provides a physical environment optimized to promote and accelerate protein folding. The polypeptide is Chaperonin GroEL 2 (Sinorhizobium medicae (strain WSM419) (Ensifer medicae)).